Reading from the N-terminus, the 528-residue chain is Endoglucanase 24 (528 aa).

The signal sequence occupies residues 1-24 (MGSKTKGCCGWLIVALVASLVATA). The active-site Nucleophile is the D109. N-linked (GlcNAc...) asparagine glycosylation is present at N259. H446 is an active-site residue. The N-linked (GlcNAc...) asparagine glycan is linked to N487. Residues D492 and E501 contribute to the active site.

This sequence belongs to the glycosyl hydrolase 9 (cellulase E) family.

The protein resides in the secreted. The catalysed reaction is Endohydrolysis of (1-&gt;4)-beta-D-glucosidic linkages in cellulose, lichenin and cereal beta-D-glucans.. The protein is Endoglucanase 24 of Oryza sativa subsp. japonica (Rice).